Reading from the N-terminus, the 584-residue chain is Kelch domain-containing protein 4 (584 aa).

Basic residues predominate over residues 1–10 (MGKKGKKEKK). Disordered regions lie at residues 1–33 (MGKK…RKEE) and 50–69 (KTQV…NASL). A compositionally biased stretch (basic and acidic residues) spans 11–24 (GRGAEKTAAKMEKK). Kelch repeat units follow at residues 77–129 (ELIL…VVPQ), 133–187 (QLWV…AWKR), 188–238 (QLIL…LMAV), 243–289 (SIAI…INPS), and 308–361 (QILV…RRGK). Disordered regions lie at residues 348-381 (KGPK…APEP), 405-433 (SGLG…CPRS), and 482-533 (PKSQ…EQFE). Ser-418 is subject to Phosphoserine. Residues 443-494 (LLYVYGGMFEAGDRQVTLSDLYCLDLHKMEEWKTLVEMDPKSQEWLEESDSE) form a Kelch 6 repeat. Positions 487 to 519 (WLEESDSEEDSSSDEESEDGEDKDQEDSAEEGA) are enriched in acidic residues. The span at 520-533 (DPQHPEVARGEQFE) shows a compositional bias: basic and acidic residues.

The polypeptide is Kelch domain-containing protein 4 (Klhdc4) (Mus musculus (Mouse)).